A 593-amino-acid chain; its full sequence is Meiotic recombination protein REC8 homolog (593 aa).

Serine 149 carries the phosphoserine modification. Threonine 164 carries the phosphothreonine modification. Position 192 is a phosphoserine (serine 192). Disordered stretches follow at residues 247 to 282 (QRRASPPLDESKEEPRALEGDGLVSSLSPPAPAQVE), 317 to 344 (ELRLPAPPSIEKRPPSPQRPPRRRRRGR), and 422 to 444 (PQLETEETVEEERVADKEERRKT). A compositionally biased stretch (basic and acidic residues) spans 255–265 (DESKEEPRALE). Over residues 432 to 444 (EERVADKEERRKT) the composition is skewed to basic and acidic residues.

Belongs to the rad21 family. Interacts (phosphorylated and unphosphorylated form) with SMC3. Interacts with SYCP3. Interacts (phosphorylated and unphosphorylated form) with SMC1B. Does not interact with SMC1A. Interacts with RAD51. Forms a complex with EWSR1, PRDM9, SYCP3 and SYCP1; complex formation is dependent of phosphorylated form of REC8 and requires PRDM9 bound to hotspot DNA; EWSR1 joins PRDM9 with the chromosomal axis through REC8. Post-translationally, phosphorylated.

It localises to the nucleus. The protein resides in the chromosome. The protein localises to the centromere. Its function is as follows. Required during meiosis for separation of sister chromatids and homologous chromosomes. Proteolytic cleavage of REC8 on chromosome arms by separin during anaphase I allows for homologous chromosome separation in meiosis I and cleavage of REC8 on centromeres during anaphase II allows for sister chromatid separation in meiosis II. In Rattus norvegicus (Rat), this protein is Meiotic recombination protein REC8 homolog.